A 592-amino-acid chain; its full sequence is Aspartate--tRNA ligase (592 aa).

Glu171 serves as a coordination point for L-aspartate. The interval 195-198 is aspartate; the sequence is QLFK. Arg217 contributes to the L-aspartate binding site. Residues 217 to 219 and Gln226 each bind ATP; that span reads RDE. L-aspartate is bound at residue His448. Residue Glu482 participates in ATP binding. Arg489 contacts L-aspartate. 534–537 lines the ATP pocket; that stretch reads GLDR.

The protein belongs to the class-II aminoacyl-tRNA synthetase family. Type 1 subfamily. As to quaternary structure, homodimer.

Its subcellular location is the cytoplasm. The catalysed reaction is tRNA(Asp) + L-aspartate + ATP = L-aspartyl-tRNA(Asp) + AMP + diphosphate. Functionally, catalyzes the attachment of L-aspartate to tRNA(Asp) in a two-step reaction: L-aspartate is first activated by ATP to form Asp-AMP and then transferred to the acceptor end of tRNA(Asp). The polypeptide is Aspartate--tRNA ligase (Vibrio vulnificus (strain CMCP6)).